A 327-amino-acid polypeptide reads, in one-letter code: Tartrate-resistant acid phosphatase type 5 (327 aa).

A signal peptide spans 1–22 (MDTWMVLLGLQILLLPLLAHCT). Fe cation-binding residues include Asp35, Asp73, Tyr76, and Asn112. 2 N-linked (GlcNAc...) asparagine glycosylation sites follow: Asn118 and Asn149. A disulfide bond links Cys163 and Cys221. His207, His242, and His244 together coordinate Fe cation.

In terms of assembly, exists either as monomer or, after proteolytic processing, as a dimer of two chains linked by disulfide bond(s). Fe cation is required as a cofactor. As to expression, characteristic constituent of osteoclasts and some mononuclear preosteoclasts. Preferentially expressed in skeletal tissues.

Its subcellular location is the lysosome. The catalysed reaction is a phosphate monoester + H2O = an alcohol + phosphate. May play a role in the process of bone resorption. The osteoclastic trap acts on nucleotide tri- and diphosphates with higher affinity, compared with other substrates. The sequence is that of Tartrate-resistant acid phosphatase type 5 (Acp5) from Rattus norvegicus (Rat).